Reading from the N-terminus, the 88-residue chain is Putative membrane protein insertion efficiency factor (88 aa).

This sequence belongs to the UPF0161 family.

It is found in the cell inner membrane. Could be involved in insertion of integral membrane proteins into the membrane. This Prochlorococcus marinus (strain MIT 9313) protein is Putative membrane protein insertion efficiency factor.